The chain runs to 461 residues: MLKIFNTMSRQKEEFKPIHAGEVGMYVCGITVYDLCHIGHGRTFIAFDVVARYLRFLGYKLKYVRNITDIDDKIIKRANENGEDFVALVDRMVTEMHKDFDALNILRPDSEPRATQHIPEIIEIVEQLIARGHAYVAGNGDVMFAVESDADYGKLSRQDLEQLQAGARVEVADSKRNPMDFVLWKMSKPGEPSWPSPWGDGRPGWHIECSAMNCKQLGSHFDIHGGGSDLMFPHHENEIAQSTCAHDGEYVNYWMHSGMVMVDREKMSKSLGNFFTVRDVLQHYDAETVRYFLMSGHYRSQLNYSEENLKQARASLERLYTALRGTDASATVAGGEAFEARFVEAMNDDFNTPEAYSVLFDMAREVNRLKAEDSSAANQLAAHLRKLAAVLGLLEQEPEQFLQSGAQANDDEVAEIEALIVKRLEARKAKDWAAADAARDRLNEMGIILEDGPQGTTWRRK.

A Zn(2+)-binding site is contributed by C28. The 'HIGH' region signature appears at I30–H40. C209, H234, and E238 together coordinate Zn(2+). The 'KMSKS' region signature appears at K266–S270. Residue K269 participates in ATP binding.

This sequence belongs to the class-I aminoacyl-tRNA synthetase family. As to quaternary structure, monomer. The cofactor is Zn(2+).

The protein resides in the cytoplasm. It carries out the reaction tRNA(Cys) + L-cysteine + ATP = L-cysteinyl-tRNA(Cys) + AMP + diphosphate. The polypeptide is Cysteine--tRNA ligase (Cronobacter sakazakii (strain ATCC BAA-894) (Enterobacter sakazakii)).